The primary structure comprises 94 residues: Large ribosomal subunit protein uL23 (94 aa).

The protein belongs to the universal ribosomal protein uL23 family. Part of the 50S ribosomal subunit. Contacts protein L29, and trigger factor when it is bound to the ribosome.

One of the early assembly proteins it binds 23S rRNA. One of the proteins that surrounds the polypeptide exit tunnel on the outside of the ribosome. Forms the main docking site for trigger factor binding to the ribosome. The chain is Large ribosomal subunit protein uL23 from Treponema denticola (strain ATCC 35405 / DSM 14222 / CIP 103919 / JCM 8153 / KCTC 15104).